A 213-amino-acid polypeptide reads, in one-letter code: Uridine kinase (213 aa).

13 to 20 (GASASGKS) contacts ATP.

The protein belongs to the uridine kinase family.

Its subcellular location is the cytoplasm. The catalysed reaction is uridine + ATP = UMP + ADP + H(+). It catalyses the reaction cytidine + ATP = CMP + ADP + H(+). The protein operates within pyrimidine metabolism; CTP biosynthesis via salvage pathway; CTP from cytidine: step 1/3. Its pathway is pyrimidine metabolism; UMP biosynthesis via salvage pathway; UMP from uridine: step 1/1. The sequence is that of Uridine kinase from Haemophilus influenzae (strain PittGG).